Consider the following 672-residue polypeptide: Probable urocanate hydratase (672 aa).

NAD(+) contacts are provided by residues 128–129 (GG), Gln-206, 253–255 (GMS), Glu-273, 318–319 (NV), 340–344 (QTSLH), 351–352 (YY), Tyr-400, and Gly-592.

The protein belongs to the urocanase family. It depends on NAD(+) as a cofactor.

The enzyme catalyses 4-imidazolone-5-propanoate = trans-urocanate + H2O. It participates in amino-acid degradation; L-histidine degradation into L-glutamate; N-formimidoyl-L-glutamate from L-histidine: step 2/3. This is Probable urocanate hydratase (uroc1) from Dictyostelium discoideum (Social amoeba).